The primary structure comprises 139 residues: I-Kappa-B like protein N1 (139 aa).

ANK repeat units follow at residues 16–48 (NGEN…QYLL), 54–87 (EGRK…DVNG), and 92–122 (TGDT…NINA).

It belongs to the polydnaviridae I-Kappa-B-like protein family.

Its function is as follows. Suppresses the host immune response through NF-kappa-B inactivation. Possesses ankyrin repeat domain required for NF-kappa-B binding but lack the regulatory regions required for dissociation from NF-kappa-B and degradation. Therefore, prevents host NF-kappa-B release and subsequent activation. This chain is I-Kappa-B like protein N1 (N2), found in Microplitis demolitor bracovirus (isolate Webb) (MdBV).